The chain runs to 238 residues: Ribonuclease PH (238 aa).

Phosphate-binding positions include arginine 86 and 124–126; that span reads GTR.

The protein belongs to the RNase PH family. In terms of assembly, homohexameric ring arranged as a trimer of dimers.

It catalyses the reaction tRNA(n+1) + phosphate = tRNA(n) + a ribonucleoside 5'-diphosphate. Phosphorolytic 3'-5' exoribonuclease that plays an important role in tRNA 3'-end maturation. Removes nucleotide residues following the 3'-CCA terminus of tRNAs; can also add nucleotides to the ends of RNA molecules by using nucleoside diphosphates as substrates, but this may not be physiologically important. Probably plays a role in initiation of 16S rRNA degradation (leading to ribosome degradation) during starvation. The sequence is that of Ribonuclease PH from Haemophilus influenzae (strain 86-028NP).